A 439-amino-acid polypeptide reads, in one-letter code: 23S rRNA (uracil(1939)-C(5))-methyltransferase RlmD (439 aa).

Residues 1 to 54 form the TRAM domain; the sequence is MTAPVLIESLDQEGRGVAHAEGKVIFIEGALPGEVVTYNAYRRKPSFELAQVGQ. Cys67, Cys73, Cys76, and Cys155 together coordinate [4Fe-4S] cluster. The S-adenosyl-L-methionine site is built by Gln264, Phe293, Asn298, Glu314, Asn342, and Asp363. Residue Cys391 is the Nucleophile of the active site.

It belongs to the class I-like SAM-binding methyltransferase superfamily. RNA M5U methyltransferase family. RlmD subfamily.

It carries out the reaction uridine(1939) in 23S rRNA + S-adenosyl-L-methionine = 5-methyluridine(1939) in 23S rRNA + S-adenosyl-L-homocysteine + H(+). Functionally, catalyzes the formation of 5-methyl-uridine at position 1939 (m5U1939) in 23S rRNA. The sequence is that of 23S rRNA (uracil(1939)-C(5))-methyltransferase RlmD from Nitrosospira multiformis (strain ATCC 25196 / NCIMB 11849 / C 71).